Here is a 169-residue protein sequence, read N- to C-terminus: Putative phosphoesterase SSP1770 (169 aa).

The active-site Proton donor is the H34. 2 consecutive short sequence motifs (HXTX) follow at residues 34–37 and 115–118; these read HITI and HFTI. The active-site Proton acceptor is the H115.

It belongs to the 2H phosphoesterase superfamily. YjcG family.

This Staphylococcus saprophyticus subsp. saprophyticus (strain ATCC 15305 / DSM 20229 / NCIMB 8711 / NCTC 7292 / S-41) protein is Putative phosphoesterase SSP1770.